A 362-amino-acid chain; its full sequence is Histidinol-phosphate aminotransferase (362 aa).

K220 bears the N6-(pyridoxal phosphate)lysine mark.

Belongs to the class-II pyridoxal-phosphate-dependent aminotransferase family. Histidinol-phosphate aminotransferase subfamily. Homodimer. Pyridoxal 5'-phosphate serves as cofactor.

It carries out the reaction L-histidinol phosphate + 2-oxoglutarate = 3-(imidazol-4-yl)-2-oxopropyl phosphate + L-glutamate. It participates in amino-acid biosynthesis; L-histidine biosynthesis; L-histidine from 5-phospho-alpha-D-ribose 1-diphosphate: step 7/9. This chain is Histidinol-phosphate aminotransferase, found in Rhodospirillum centenum (strain ATCC 51521 / SW).